We begin with the raw amino-acid sequence, 310 residues long: Aspartate carbamoyltransferase catalytic subunit (310 aa).

The carbamoyl phosphate site is built by Arg-59 and Thr-60. Lys-87 is a binding site for L-aspartate. Carbamoyl phosphate-binding residues include Arg-109, His-137, and Gln-140. Positions 170 and 225 each coordinate L-aspartate. 2 residues coordinate carbamoyl phosphate: Gly-266 and Pro-267.

It belongs to the aspartate/ornithine carbamoyltransferase superfamily. ATCase family. In terms of assembly, heterododecamer (2C3:3R2) of six catalytic PyrB chains organized as two trimers (C3), and six regulatory PyrI chains organized as three dimers (R2).

It carries out the reaction carbamoyl phosphate + L-aspartate = N-carbamoyl-L-aspartate + phosphate + H(+). Its pathway is pyrimidine metabolism; UMP biosynthesis via de novo pathway; (S)-dihydroorotate from bicarbonate: step 2/3. Catalyzes the condensation of carbamoyl phosphate and aspartate to form carbamoyl aspartate and inorganic phosphate, the committed step in the de novo pyrimidine nucleotide biosynthesis pathway. The protein is Aspartate carbamoyltransferase catalytic subunit of Pelobacter propionicus (strain DSM 2379 / NBRC 103807 / OttBd1).